We begin with the raw amino-acid sequence, 583 residues long: CD166 antigen (583 aa).

The N-terminal stretch at 1–27 (MASKGSPSCRLVFCLLISAAVLRPGLG) is a signal peptide. 2 consecutive Ig-like V-type domains span residues 28–120 (WYTV…TEDN) and 125–234 (PTLV…KTIY). The Extracellular portion of the chain corresponds to 28–527 (WYTVNSAYGD…NREKVNDQAK (500 aa)). Disulfide bonds link Cys-43–Cys-113 and Cys-157–Cys-220. 8 N-linked (GlcNAc...) asparagine glycosylation sites follow: Asn-95, Asn-167, Asn-265, Asn-306, Asn-361, Asn-457, Asn-480, and Asn-499. Ig-like C2-type domains follow at residues 245–328 (PTEQ…TTIT), 333–409 (DLSL…ESLT), and 416–501 (PQIK…LNVS). Cystine bridges form between Cys-270/Cys-313, Cys-354/Cys-392, and Cys-435/Cys-485. Residues 528–549 (LIVGIVVGLLLAALVAGVVYWL) traverse the membrane as a helical segment. The Cytoplasmic portion of the chain corresponds to 550–583 (YMKKSKTASKHVNKDLGNMEENKKLEENNHKTEA). The segment at 562-583 (NKDLGNMEENKKLEENNHKTEA) is disordered. The segment covering 569–583 (EENKKLEENNHKTEA) has biased composition (basic and acidic residues).

As to quaternary structure, homodimer. Interacts (via extracellular domain) with CD6 (via extracellular domain). Homodimerization and interaction with CD6 involve the same region and cannot occur simultaneously. The affinity for CD6 is much higher than the affinity for self-association. Interacts (via glycosylated extracellular domain) with LGALS1 and LGALS3. Interaction with LGALS1 or LGALS3 inhibits interaction with CD6. In terms of processing, the N-terminus is blocked. Post-translationally, glycosylated. In terms of tissue distribution, strongest expression in the lung, then brain, liver, and kidney. Present in the somatosensory system, basal ganglia, cortex, olfactory system, and circumventricular organs.

Its subcellular location is the cell membrane. The protein resides in the cell projection. It localises to the axon. It is found in the dendrite. In terms of biological role, cell adhesion molecule that mediates both heterotypic cell-cell contacts via its interaction with CD6, as well as homotypic cell-cell contacts. Promotes T-cell activation and proliferation via its interactions with CD6. Contributes to the formation and maturation of the immunological synapse via its interactions with CD6. Mediates homotypic interactions with cells that express ALCAM. Mediates attachment of dendritic cells onto endothelial cells via homotypic interaction. Inhibits endothelial cell migration and promotes endothelial tube formation via homotypic interactions. Required for normal organization of the lymph vessel network. Required for normal hematopoietic stem cell engraftment in the bone marrow. Plays a role in hematopoiesis; required for normal numbers of hematopoietic stem cells in bone marrow. Promotes in vitro osteoblast proliferation and differentiation. Promotes neurite extension, axon growth and axon guidance; axons grow preferentially on surfaces that contain ALCAM. Mediates outgrowth and pathfinding for retinal ganglion cell axons. This is CD166 antigen (Alcam) from Rattus norvegicus (Rat).